Here is a 303-residue protein sequence, read N- to C-terminus: Tyrosine recombinase XerC (303 aa).

A Core-binding (CB) domain is found at 3-89; it reads IQNDQWVSAF…TLRSFYQFLV (87 aa). The 188-residue stretch at 110-297 folds into the Tyr recombinase domain; sequence KLPSFLYEEE…TKDRLRDVYR (188 aa). Active-site residues include R150, K174, H249, R252, and H275. Y284 functions as the O-(3'-phospho-DNA)-tyrosine intermediate in the catalytic mechanism.

Belongs to the 'phage' integrase family. XerC subfamily. As to quaternary structure, forms a cyclic heterotetrameric complex composed of two molecules of XerC and two molecules of XerD.

The protein localises to the cytoplasm. Functionally, site-specific tyrosine recombinase, which acts by catalyzing the cutting and rejoining of the recombining DNA molecules. The XerC-XerD complex is essential to convert dimers of the bacterial chromosome into monomers to permit their segregation at cell division. It also contributes to the segregational stability of plasmids. This Halalkalibacterium halodurans (strain ATCC BAA-125 / DSM 18197 / FERM 7344 / JCM 9153 / C-125) (Bacillus halodurans) protein is Tyrosine recombinase XerC.